Here is a 311-residue protein sequence, read N- to C-terminus: Nudix hydrolase 9 (311 aa).

Positions 131-298 (SSPLGNGAVI…GFALYELMLQ (168 aa)) constitute a Nudix hydrolase domain. The Nudix box motif lies at 192–213 (LNKKVTQEMFDSIICEVVEETG). Mg(2+)-binding residues include Glu207 and Glu211.

It belongs to the Nudix hydrolase family. Mg(2+) serves as cofactor. Requires Mn(2+) as cofactor. In terms of tissue distribution, expressed in roots, stems and leaves.

In terms of biological role, probably mediates the hydrolysis of some nucleoside diphosphate derivatives. In Arabidopsis thaliana (Mouse-ear cress), this protein is Nudix hydrolase 9 (NUDT9).